The primary structure comprises 1135 residues: Receptor-type guanylate cyclase gcy-4 (1135 aa).

An N-terminal signal peptide occupies residues 1 to 20 (MTQLLRFLLILSIFCDFSHS). At 21-483 (QRPTIRVGIA…CPIPFFDQYR (463 aa)) the chain is on the extracellular side. N-linked (GlcNAc...) asparagine glycosylation is found at asparagine 37, asparagine 193, asparagine 209, asparagine 251, asparagine 349, asparagine 375, asparagine 431, asparagine 436, and asparagine 447. Residues 484–504 (LLIFVFVIVAGLLILAIFTCL) traverse the membrane as a helical segment. Topologically, residues 505-1135 (TSMVRNQRAE…VMRREMMRVS (631 aa)) are cytoplasmic. Positions 535–560 (KGRRLSTDSENSTVTKSSKGSSSKNF) are disordered. Residues 545-837 (NSTVTKSSKG…KDNLMDHVFS (293 aa)) form the Protein kinase domain. Low complexity predominate over residues 546-560 (STVTKSSKGSSSKNF). Positions 895-1025 (TVFFSDLVKF…DTVNTASRME (131 aa)) constitute a Guanylate cyclase domain.

The protein belongs to the adenylyl cyclase class-4/guanylyl cyclase family. Expressed bilaterally in ASE neurons.

It is found in the cell membrane. The catalysed reaction is GTP = 3',5'-cyclic GMP + diphosphate. Guanylate cyclase involved in the production of the second messenger cGMP. Regulates chemotaxis responses toward salt ions in ASE sensory neurons. The polypeptide is Receptor-type guanylate cyclase gcy-4 (Caenorhabditis briggsae).